Here is a 190-residue protein sequence, read N- to C-terminus: Peptidyl-tRNA hydrolase (190 aa).

TRNA is bound at residue tyrosine 18. Histidine 23 (proton acceptor) is an active-site residue. Residues tyrosine 69, asparagine 71, and asparagine 117 each coordinate tRNA.

It belongs to the PTH family. In terms of assembly, monomer.

The protein localises to the cytoplasm. The enzyme catalyses an N-acyl-L-alpha-aminoacyl-tRNA + H2O = an N-acyl-L-amino acid + a tRNA + H(+). Its function is as follows. Hydrolyzes ribosome-free peptidyl-tRNAs (with 1 or more amino acids incorporated), which drop off the ribosome during protein synthesis, or as a result of ribosome stalling. Functionally, catalyzes the release of premature peptidyl moieties from peptidyl-tRNA molecules trapped in stalled 50S ribosomal subunits, and thus maintains levels of free tRNAs and 50S ribosomes. This Rhodococcus erythropolis (strain PR4 / NBRC 100887) protein is Peptidyl-tRNA hydrolase.